A 383-amino-acid polypeptide reads, in one-letter code: Protein delta homolog 2 (383 aa).

An N-terminal signal peptide occupies residues 1–26 (MPSGCRCLHLVCLLCILGAPGQPVRA). EGF-like domains are found at residues 27-58 (DDCS…LHCE), 62-89 (RMPG…KFCD), 91-129 (DEHI…RDCE), and 131-172 (KAGP…ARCE). Over 27 to 306 (DDCSSHCDLA…RQEAGLGEPS (280 aa)) the chain is Extracellular. Disulfide bonds link C29-C40, C33-C46, C48-C57, C66-C71, C79-C88, C95-C107, C101-C117, C119-C128, C135-C148, C142-C160, C162-C171, C178-C189, C183-C198, C200-C209, C216-C227, C221-C236, and C238-C247. An N-linked (GlcNAc...) asparagine glycan is attached at N157. One can recognise an EGF-like 5; calcium-binding domain in the interval 174 to 210 (NVDDCLMRPCANGATCLDGINRFSCLCPEGFAGRFCT). Residues 212–248 (NLDDCASRPCQRGARCRDRVHDFDCLCPSGYGGKTCE) form the EGF-like 6; calcium-binding domain. The helical transmembrane segment at 307–327 (LVALVVFGALTAALVLATVLL) threads the bilayer. The Cytoplasmic portion of the chain corresponds to 328–383 (TLRAWRRGVCPPGPCCYPAPHYAPACQDQECQVSMLPAGLPLPRDLPPEPGKTTAL).

It localises to the membrane. Functionally, regulates adipogenesis. In Homo sapiens (Human), this protein is Protein delta homolog 2 (DLK2).